We begin with the raw amino-acid sequence, 1414 residues long: DNA-directed RNA polymerase subunit beta' (1414 aa).

Zn(2+) is bound by residues Cys-70, Cys-72, Cys-85, and Cys-88. Asp-460, Asp-462, and Asp-464 together coordinate Mg(2+). Residues Cys-814, Cys-888, Cys-895, and Cys-898 each coordinate Zn(2+). Residues 1392–1403 (EQALSEALKSSA) are compositionally biased toward low complexity. The tract at residues 1392–1414 (EQALSEALKSSAPQEAKAAQKDE) is disordered.

Belongs to the RNA polymerase beta' chain family. As to quaternary structure, the RNAP catalytic core consists of 2 alpha, 1 beta, 1 beta' and 1 omega subunit. When a sigma factor is associated with the core the holoenzyme is formed, which can initiate transcription. The cofactor is Mg(2+). Requires Zn(2+) as cofactor.

The enzyme catalyses RNA(n) + a ribonucleoside 5'-triphosphate = RNA(n+1) + diphosphate. Its function is as follows. DNA-dependent RNA polymerase catalyzes the transcription of DNA into RNA using the four ribonucleoside triphosphates as substrates. This chain is DNA-directed RNA polymerase subunit beta', found in Coxiella burnetii (strain RSA 331 / Henzerling II).